The sequence spans 281 residues: NADPH-dependent 7-cyano-7-deazaguanine reductase (281 aa).

Residue 87 to 89 (IES) participates in substrate binding. 89–90 (SK) provides a ligand contact to NADPH. C188 serves as the catalytic Thioimide intermediate. Catalysis depends on D195, which acts as the Proton donor. 227–228 (HE) serves as a coordination point for substrate. An NADPH-binding site is contributed by 256–257 (RG). The tract at residues 261-281 (INPYRSTEQAKPDHNHRMARQ) is disordered. The segment covering 268 to 281 (EQAKPDHNHRMARQ) has biased composition (basic and acidic residues).

It belongs to the GTP cyclohydrolase I family. QueF type 2 subfamily. As to quaternary structure, homodimer.

It is found in the cytoplasm. It catalyses the reaction 7-aminomethyl-7-carbaguanine + 2 NADP(+) = 7-cyano-7-deazaguanine + 2 NADPH + 3 H(+). It functions in the pathway tRNA modification; tRNA-queuosine biosynthesis. Catalyzes the NADPH-dependent reduction of 7-cyano-7-deazaguanine (preQ0) to 7-aminomethyl-7-deazaguanine (preQ1). This Vibrio vulnificus (strain CMCP6) protein is NADPH-dependent 7-cyano-7-deazaguanine reductase.